The following is a 200-amino-acid chain: MKIVLASNNRGKLAELQAMFAPLGVELIRQGDLFEGEAPEPHCTFVENALSKARFAAERTGLPAIADDAGMCVSHFGGLPGVDTAYYCTQFGYEKSDDNNVRALLEQMQGVADRRAAMVSTLVGVRSARDPEPLIAMGRVLGEITTERRGTQGFGFDPVMYIPELGQTFAEMDPAVKHAHSHRGRATLQMIELVRERWVR.

7-12 (SNNRGK) is a substrate binding site. Asp68 serves as the catalytic Proton acceptor. Position 68 (Asp68) interacts with Mg(2+). Residues Ala69, 154–157 (FGFD), Lys177, and 182–183 (HR) each bind substrate.

The protein belongs to the HAM1 NTPase family. In terms of assembly, homodimer. It depends on Mg(2+) as a cofactor.

It catalyses the reaction XTP + H2O = XMP + diphosphate + H(+). The enzyme catalyses dITP + H2O = dIMP + diphosphate + H(+). It carries out the reaction ITP + H2O = IMP + diphosphate + H(+). Functionally, pyrophosphatase that catalyzes the hydrolysis of nucleoside triphosphates to their monophosphate derivatives, with a high preference for the non-canonical purine nucleotides XTP (xanthosine triphosphate), dITP (deoxyinosine triphosphate) and ITP. Seems to function as a house-cleaning enzyme that removes non-canonical purine nucleotides from the nucleotide pool, thus preventing their incorporation into DNA/RNA and avoiding chromosomal lesions. This is dITP/XTP pyrophosphatase from Delftia acidovorans (strain DSM 14801 / SPH-1).